The chain runs to 138 residues: Translation initiation factor 2 subunit beta (138 aa).

Belongs to the eIF-2-beta/eIF-5 family. In terms of assembly, heterotrimer composed of an alpha, a beta and a gamma chain.

Functionally, eIF-2 functions in the early steps of protein synthesis by forming a ternary complex with GTP and initiator tRNA. This Methanopyrus kandleri (strain AV19 / DSM 6324 / JCM 9639 / NBRC 100938) protein is Translation initiation factor 2 subunit beta.